The following is a 522-amino-acid chain: Ribonuclease Y (522 aa).

Residues 3-23 (ELIMYILATAVVSIGVGIVAG) traverse the membrane as a helical segment. A KH domain is found at 212 to 272 (CVSIFNIESD…VRREVARLSL (61 aa)). Residues 338 to 431 (LLQHSREVAK…VQVCDAISGA (94 aa)) enclose the HD domain.

This sequence belongs to the RNase Y family.

It is found in the cell membrane. In terms of biological role, endoribonuclease that initiates mRNA decay. The chain is Ribonuclease Y from Cytophaga hutchinsonii (strain ATCC 33406 / DSM 1761 / CIP 103989 / NBRC 15051 / NCIMB 9469 / D465).